A 315-amino-acid chain; its full sequence is MSTARTDDDSWEITESVGATALGVASARAAETRSENPLIKDPFAQVFLDAAGDGVWNWHSAPQLPPELIEAEPTIPLQQQAMVSYMASRTAFFDSFFLEATGAGIRQAVILAAGLDARSWRLPWPAGTTVYELDQPRVLEFKESTLAEHGAQPACNRVAVPVDLRHDWPEALRQAGFDASAPSVWSAEGLMPYLPAAAQDLLFDRIQGLTVAGSRVAVEALGPKFLDPQARAKRRERMDRIQALMARIDPDRAVPRTDELWYFEEREDVGEWFGRHGWDVRVTPSDELMAGYGRPAPAEVRDFVPGNLFVAAQRR.

S-adenosyl-L-methionine is bound by residues Asp134 and 163–164; that span reads DL.

Belongs to the UPF0677 family.

Functionally, exhibits S-adenosyl-L-methionine-dependent methyltransferase activity. The protein is Putative S-adenosyl-L-methionine-dependent methyltransferase MAV_4557 of Mycobacterium avium (strain 104).